A 227-amino-acid polypeptide reads, in one-letter code: 7-cyano-7-deazaguanine synthase (227 aa).

8-18 (LSGGTDSATVL) is a binding site for ATP. Zn(2+) is bound by residues C192, C202, C205, and C208.

The protein belongs to the QueC family. It depends on Zn(2+) as a cofactor.

The enzyme catalyses 7-carboxy-7-deazaguanine + NH4(+) + ATP = 7-cyano-7-deazaguanine + ADP + phosphate + H2O + H(+). It functions in the pathway purine metabolism; 7-cyano-7-deazaguanine biosynthesis. Catalyzes the ATP-dependent conversion of 7-carboxy-7-deazaguanine (CDG) to 7-cyano-7-deazaguanine (preQ(0)). The protein is 7-cyano-7-deazaguanine synthase of Rickettsia prowazekii (strain Madrid E).